Reading from the N-terminus, the 596-residue chain is Transketolase-like protein 1 (596 aa).

His46 is a substrate binding site. Thiamine diphosphate-binding positions include Ser49 and 94–96 (GWL). Asp126 serves as a coordination point for Mg(2+). Residues Gly127 and Asn156 each contribute to the thiamine diphosphate site. Mg(2+) is bound by residues Asn156 and Leu158. Thiamine diphosphate contacts are provided by Lys218 and His232. Positions 232, 292, and 319 each coordinate substrate. Thiamine diphosphate is bound by residues Glu340 and Phe366. Residue Glu340 is the Proton donor of the active site. Positions 390 and 398 each coordinate substrate. Gln402 provides a ligand contact to thiamine diphosphate. Arg448 is a substrate binding site.

It belongs to the transketolase family. As to quaternary structure, homodimer. Requires Mg(2+) as cofactor. It depends on Ca(2+) as a cofactor. Mn(2+) is required as a cofactor. Co(2+) serves as cofactor. The cofactor is thiamine diphosphate. Widely expressed. Expressed in endothelial cells and in peripheral neurons (at protein level). As to expression, not expressed in fetal neocortex. In terms of tissue distribution, expressed in fetal neocortex.

It is found in the cytoplasm. The catalysed reaction is D-sedoheptulose 7-phosphate + D-glyceraldehyde 3-phosphate = aldehydo-D-ribose 5-phosphate + D-xylulose 5-phosphate. Catalyzes the transfer of a two-carbon ketol group from a ketose donor to an aldose acceptor, via a covalent intermediate with the cofactor thiamine pyrophosphate. Functionally, during fetal neocortex development, may be essential to maintain the full number of basal radial glia (bRG). bRG are neural progenitor cells that undergo asymmetric divisions, generating a bRG (self-renewal) and a neuron, in contrast to basal intermediate progenitors (bIPs), which typically divide once to give rise to 2 neurons. bRG generate more cortical neurons over time than bIPs. This Homo sapiens (Human) protein is Transketolase-like protein 1 (TKTL1).